We begin with the raw amino-acid sequence, 121 residues long: Small ribosomal subunit protein uS11c (121 aa).

Belongs to the universal ribosomal protein uS11 family. Part of the 30S ribosomal subunit.

It localises to the plastid. The protein resides in the chloroplast. In Cyanidioschyzon merolae (strain NIES-3377 / 10D) (Unicellular red alga), this protein is Small ribosomal subunit protein uS11c.